A 121-amino-acid chain; its full sequence is NAD(P)H-quinone oxidoreductase subunit 3, chloroplastic (121 aa).

Helical transmembrane passes span 10–30 (FFIF…ISKF), 65–85 (MFAL…PWAM), and 90–110 (LGLS…IGLV).

This sequence belongs to the complex I subunit 3 family. NDH is composed of at least 16 different subunits, 5 of which are encoded in the nucleus.

It is found in the plastid. The protein resides in the chloroplast thylakoid membrane. The enzyme catalyses a plastoquinone + NADH + (n+1) H(+)(in) = a plastoquinol + NAD(+) + n H(+)(out). It carries out the reaction a plastoquinone + NADPH + (n+1) H(+)(in) = a plastoquinol + NADP(+) + n H(+)(out). Functionally, NDH shuttles electrons from NAD(P)H:plastoquinone, via FMN and iron-sulfur (Fe-S) centers, to quinones in the photosynthetic chain and possibly in a chloroplast respiratory chain. The immediate electron acceptor for the enzyme in this species is believed to be plastoquinone. Couples the redox reaction to proton translocation, and thus conserves the redox energy in a proton gradient. In Physcomitrium patens (Spreading-leaved earth moss), this protein is NAD(P)H-quinone oxidoreductase subunit 3, chloroplastic.